The following is a 436-amino-acid chain: Putative ankyrin repeat protein FPV245 (436 aa).

10 ANK repeats span residues 1–30, 34–63, 67–96, 98–119, 123–152, 156–185, 189–218, 222–252, 253–283, and 287–317; these read MSVD…CINI, ETTT…QVNH, KIPN…DTSI, PVPC…KVNT, KSKT…DVNI, NGCY…YANV, YGNS…NISN, NGVT…DTDV, DGYT…DISI, and NGRN…LINE.

This is Putative ankyrin repeat protein FPV245 from Vertebrata (FPV).